Here is a 253-residue protein sequence, read N- to C-terminus: DNA repair protein RecO (253 aa).

This sequence belongs to the RecO family.

Functionally, involved in DNA repair and RecF pathway recombination. This Pediococcus pentosaceus (strain ATCC 25745 / CCUG 21536 / LMG 10740 / 183-1w) protein is DNA repair protein RecO.